A 641-amino-acid chain; its full sequence is Phosphomethylpyrimidine synthase (641 aa).

Positions 1–13 (MNIRSNPDTTRPA) are enriched in polar residues. The tract at residues 1–21 (MNIRSNPDTTRPAVTTGGLPS) is disordered. Substrate is bound by residues Asn221, Met250, Tyr279, His315, 335–337 (SRG), 376–379 (DGLR), and Glu415. His419 contacts Zn(2+). Tyr442 serves as a coordination point for substrate. His483 provides a ligand contact to Zn(2+). The [4Fe-4S] cluster site is built by Cys563, Cys566, and Cys571.

Belongs to the ThiC family. As to quaternary structure, homodimer. [4Fe-4S] cluster serves as cofactor.

It catalyses the reaction 5-amino-1-(5-phospho-beta-D-ribosyl)imidazole + S-adenosyl-L-methionine = 4-amino-2-methyl-5-(phosphooxymethyl)pyrimidine + CO + 5'-deoxyadenosine + formate + L-methionine + 3 H(+). The protein operates within cofactor biosynthesis; thiamine diphosphate biosynthesis. Catalyzes the synthesis of the hydroxymethylpyrimidine phosphate (HMP-P) moiety of thiamine from aminoimidazole ribotide (AIR) in a radical S-adenosyl-L-methionine (SAM)-dependent reaction. This chain is Phosphomethylpyrimidine synthase, found in Rhodopseudomonas palustris (strain BisB5).